The following is a 283-amino-acid chain: MEMO1 family protein DKAM_1357 (283 aa).

The protein belongs to the MEMO1 family.

The sequence is that of MEMO1 family protein DKAM_1357 from Desulfurococcus amylolyticus (strain DSM 18924 / JCM 16383 / VKM B-2413 / 1221n) (Desulfurococcus kamchatkensis).